The chain runs to 157 residues: 2-C-methyl-D-erythritol 2,4-cyclodiphosphate synthase (157 aa).

A divalent metal cation-binding residues include Asp8 and His10. 4-CDP-2-C-methyl-D-erythritol 2-phosphate contacts are provided by residues 8-10 (DVH) and 34-35 (HS). A divalent metal cation is bound at residue His42. Residues 56–58 (DLG), 61–65 (FPDTD), 132–135 (TTTE), Phe139, and Arg142 contribute to the 4-CDP-2-C-methyl-D-erythritol 2-phosphate site.

This sequence belongs to the IspF family. Homotrimer. Requires a divalent metal cation as cofactor.

It catalyses the reaction 4-CDP-2-C-methyl-D-erythritol 2-phosphate = 2-C-methyl-D-erythritol 2,4-cyclic diphosphate + CMP. It functions in the pathway isoprenoid biosynthesis; isopentenyl diphosphate biosynthesis via DXP pathway; isopentenyl diphosphate from 1-deoxy-D-xylulose 5-phosphate: step 4/6. Involved in the biosynthesis of isopentenyl diphosphate (IPP) and dimethylallyl diphosphate (DMAPP), two major building blocks of isoprenoid compounds. Catalyzes the conversion of 4-diphosphocytidyl-2-C-methyl-D-erythritol 2-phosphate (CDP-ME2P) to 2-C-methyl-D-erythritol 2,4-cyclodiphosphate (ME-CPP) with a corresponding release of cytidine 5-monophosphate (CMP). This Salinibacter ruber (strain DSM 13855 / M31) protein is 2-C-methyl-D-erythritol 2,4-cyclodiphosphate synthase.